A 730-amino-acid polypeptide reads, in one-letter code: 1,4-alpha-glucan branching enzyme GlgB (730 aa).

The active-site Nucleophile is the aspartate 405. Glutamate 458 (proton donor) is an active-site residue.

It belongs to the glycosyl hydrolase 13 family. GlgB subfamily. In terms of assembly, monomer.

The enzyme catalyses Transfers a segment of a (1-&gt;4)-alpha-D-glucan chain to a primary hydroxy group in a similar glucan chain.. Its pathway is glycan biosynthesis; glycogen biosynthesis. Its function is as follows. Catalyzes the formation of the alpha-1,6-glucosidic linkages in glycogen by scission of a 1,4-alpha-linked oligosaccharide from growing alpha-1,4-glucan chains and the subsequent attachment of the oligosaccharide to the alpha-1,6 position. The protein is 1,4-alpha-glucan branching enzyme GlgB (glgB) of Haemophilus influenzae (strain ATCC 51907 / DSM 11121 / KW20 / Rd).